Reading from the N-terminus, the 210-residue chain is Pyrrolidone-carboxylate peptidase (210 aa).

Active-site residues include Glu80, Cys143, and His162.

It belongs to the peptidase C15 family. As to quaternary structure, homotetramer.

It is found in the cytoplasm. It catalyses the reaction Release of an N-terminal pyroglutamyl group from a polypeptide, the second amino acid generally not being Pro.. Removes 5-oxoproline from various penultimate amino acid residues except L-proline. The sequence is that of Pyrrolidone-carboxylate peptidase from Chromobacterium violaceum (strain ATCC 12472 / DSM 30191 / JCM 1249 / CCUG 213 / NBRC 12614 / NCIMB 9131 / NCTC 9757 / MK).